The sequence spans 328 residues: DNA-directed RNA polymerase subunit alpha (328 aa).

An alpha N-terminal domain (alpha-NTD) region spans residues 1–230 (MSNHGLQMPE…DHVSFFIQLE (230 aa)). Residues 248–328 (RIRELLAQPV…EEYLEEKKAS (81 aa)) form an alpha C-terminal domain (alpha-CTD) region.

It belongs to the RNA polymerase alpha chain family. In terms of assembly, homodimer. The RNAP catalytic core consists of 2 alpha, 1 beta, 1 beta' and 1 omega subunit. When a sigma factor is associated with the core the holoenzyme is formed, which can initiate transcription.

The enzyme catalyses RNA(n) + a ribonucleoside 5'-triphosphate = RNA(n+1) + diphosphate. DNA-dependent RNA polymerase catalyzes the transcription of DNA into RNA using the four ribonucleoside triphosphates as substrates. This is DNA-directed RNA polymerase subunit alpha from Salinibacter ruber (strain DSM 13855 / M31).